The sequence spans 120 residues: Large ribosomal subunit protein uL18 (120 aa).

The protein belongs to the universal ribosomal protein uL18 family. Part of the 50S ribosomal subunit; part of the 5S rRNA/L5/L18/L25 subcomplex. Contacts the 5S and 23S rRNAs.

This is one of the proteins that bind and probably mediate the attachment of the 5S RNA into the large ribosomal subunit, where it forms part of the central protuberance. The polypeptide is Large ribosomal subunit protein uL18 (Rhodospirillum centenum (strain ATCC 51521 / SW)).